The sequence spans 130 residues: Lipoprotein LpqS (130 aa).

Residues 1–23 (MVWMRSAIVAVALGVTVAAVAAA) form the signal peptide. The N-palmitoyl cysteine moiety is linked to residue Cys24. Cys24 carries S-diacylglycerol cysteine lipidation.

It localises to the cell membrane. May play an essential role in M.tuberculosis replication and survival inside the host cell. The polypeptide is Lipoprotein LpqS (Mycobacterium tuberculosis (strain ATCC 25618 / H37Rv)).